Consider the following 641-residue polypeptide: 1-deoxy-D-xylulose-5-phosphate synthase (641 aa).

Thiamine diphosphate contacts are provided by residues His-78 and 119–121 (AHS). Asp-150 contributes to the Mg(2+) binding site. Thiamine diphosphate contacts are provided by residues 151-152 (GA), Asn-179, Tyr-288, and Glu-370. Residue Asn-179 coordinates Mg(2+).

Belongs to the transketolase family. DXPS subfamily. Homodimer. The cofactor is Mg(2+). Thiamine diphosphate serves as cofactor.

The enzyme catalyses D-glyceraldehyde 3-phosphate + pyruvate + H(+) = 1-deoxy-D-xylulose 5-phosphate + CO2. It functions in the pathway metabolic intermediate biosynthesis; 1-deoxy-D-xylulose 5-phosphate biosynthesis; 1-deoxy-D-xylulose 5-phosphate from D-glyceraldehyde 3-phosphate and pyruvate: step 1/1. Its function is as follows. Catalyzes the acyloin condensation reaction between C atoms 2 and 3 of pyruvate and glyceraldehyde 3-phosphate to yield 1-deoxy-D-xylulose-5-phosphate (DXP). In Azorhizobium caulinodans (strain ATCC 43989 / DSM 5975 / JCM 20966 / LMG 6465 / NBRC 14845 / NCIMB 13405 / ORS 571), this protein is 1-deoxy-D-xylulose-5-phosphate synthase.